The chain runs to 85 residues: MDPKKIARINELAKKKKTVGLTGPEKVEQAKLREEYIEGYRRSVRHHIEGIKIVDEDGNDVTPEKLRQVQREKGLHGRSLDDPES.

Positions 62–85 (TPEKLRQVQREKGLHGRSLDDPES) are disordered.

Belongs to the UPF0291 family.

The protein localises to the cytoplasm. This is UPF0291 protein SEQ_0545 from Streptococcus equi subsp. equi (strain 4047).